The following is a 114-amino-acid chain: MIGIDIVSIGRISRLKERHGELFLRRFLSEDELALAKSDASIAGLWAAKEAASKALGVGIGAECSFFDIIIEKSPKNAPILKFSPKIYENFNIKEATLSISHDAGFAIAVAIVS.

2 residues coordinate Mg(2+): Asp5 and Glu50.

This sequence belongs to the P-Pant transferase superfamily. AcpS family. It depends on Mg(2+) as a cofactor.

The protein resides in the cytoplasm. The enzyme catalyses apo-[ACP] + CoA = holo-[ACP] + adenosine 3',5'-bisphosphate + H(+). Transfers the 4'-phosphopantetheine moiety from coenzyme A to a Ser of acyl-carrier-protein. The sequence is that of Holo-[acyl-carrier-protein] synthase from Campylobacter curvus (strain 525.92).